Here is a 524-residue protein sequence, read N- to C-terminus: Fusicoccadiene C-8 hydroxylase (524 aa).

A helical membrane pass occupies residues 16-36; it reads LQLLCIGPLVYACVSFIIKIV. N-linked (GlcNAc...) asparagine glycosylation is found at Asn-126 and Asn-344. Residue Cys-465 participates in heme binding. N-linked (GlcNAc...) asparagine glycosylation is present at Asn-496.

It belongs to the cytochrome P450 family. It depends on heme as a cofactor.

Its subcellular location is the membrane. The protein operates within mycotoxin biosynthesis. In terms of biological role, cytochrome P450 monooxygenase; part of the 2 gene clusters that mediate the biosynthesis of fusicoccins, diterpene glucosides that display phytohormone-like activity and function as potent activators of plasma membrane H(+)-ATPases in plants by modifying 14-3-3 proteins and cause the plant disease constriction canker. The first step in the pathway is performed by the fusicoccadiene synthase PaFS that possesses both prenyl transferase and terpene cyclase activity, converting isopentenyl diphosphate and dimethylallyl diphosphate into geranylgeranyl diphosphate (GGDP) and successively converting GGDP into fusicocca-2,10(14)-diene, a precursor for fusicoccin H. The second step is the oxidation at the C-8 position by the cytochrome P450 monooxygenase PaP450-2 to yield fusicocca-2,10(14)-diene-8-beta-ol. The cytochrome P450 monooxygenase PaP450-1 then catalyzes the hydroxylation at the C-16 position to produce fusicocca-2,10(14)-diene-8-beta,16-diol. The dioxygenase fc-dox then catalyzes the 16-oxydation of fusicocca-2,10(14)-diene-8-beta,16-diol to yield an aldehyde (8-beta-hydroxyfusicocca-1,10(14)-dien-16-al). The short-chain dehydrogenase/reductase fc-sdr catalyzes the reduction of the aldehyde to yield fusicocca-1,10(14)-diene-8-beta,16-diol. The next step is the hydroxylation at C-9 performed by the cytochrome P450 monooxygenase PaP450-3 that leads to fusicoccin H aglycon which is glycosylated to fusicoccin H by the O-glycosyltransferase PaGT. Hydroxylation at C-12 by the cytochrome P450 monooxygenase PaP450-4 leads then to the production of fusicoccin Q and is followed by methylation by the O-methyltransferase PaMT to yield fusicoccin P. Fusicoccin P is further converted to fusicoccin J via prenylation by the O-glucose prenyltransferase PaPT. Cytochrome P450 monooxygenase PaP450-5 then performs hydroxylation at C-19 to yield dideacetyl-fusicoccin A which is acetylated to 3'-O-deacetyl-fusicoccin A by the O-acetyltransferase PaAT-2. Finally, a another acetylation by the O-acetyltransferase PaAT-1 yields fusicoccin A. The protein is Fusicoccadiene C-8 hydroxylase of Phomopsis amygdali (Fusicoccum amygdali).